A 61-amino-acid polypeptide reads, in one-letter code: Small ribosomal subunit protein uS14C (61 aa).

Zn(2+) is bound by residues cysteine 24, cysteine 27, cysteine 40, and cysteine 43.

It belongs to the universal ribosomal protein uS14 family. Zinc-binding uS14 subfamily. In terms of assembly, part of the 30S ribosomal subunit. Contacts proteins S3 and S10. Zn(2+) is required as a cofactor.

Functionally, binds 16S rRNA, required for the assembly of 30S particles and may also be responsible for determining the conformation of the 16S rRNA at the A site. In Enterococcus faecalis (strain ATCC 700802 / V583), this protein is Small ribosomal subunit protein uS14C.